Here is a 113-residue protein sequence, read N- to C-terminus: Na(+)/H(+) antiporter subunit C1 (113 aa).

The next 3 helical transmembrane spans lie at 1-21 (MEII…YLVL), 28-48 (IVMG…TMGG), and 72-92 (LILT…VLAF).

It belongs to the CPA3 antiporters (TC 2.A.63) subunit C family. As to quaternary structure, may form a heterooligomeric complex that consists of seven subunits: mnhA1, mnhB1, mnhC1, mnhD1, mnhE1, mnhF1 and mnhG1.

Its subcellular location is the cell membrane. In terms of biological role, mnh complex is a Na(+)/H(+) antiporter involved in Na(+) excretion. This Staphylococcus aureus (strain JH1) protein is Na(+)/H(+) antiporter subunit C1 (mnhC1).